A 131-amino-acid polypeptide reads, in one-letter code: Ribosome-binding factor A (131 aa).

The protein belongs to the RbfA family. In terms of assembly, monomer. Binds 30S ribosomal subunits, but not 50S ribosomal subunits or 70S ribosomes.

The protein localises to the cytoplasm. One of several proteins that assist in the late maturation steps of the functional core of the 30S ribosomal subunit. Associates with free 30S ribosomal subunits (but not with 30S subunits that are part of 70S ribosomes or polysomes). Required for efficient processing of 16S rRNA. May interact with the 5'-terminal helix region of 16S rRNA. This Christiangramia forsetii (strain DSM 17595 / CGMCC 1.15422 / KT0803) (Gramella forsetii) protein is Ribosome-binding factor A.